The primary structure comprises 455 residues: SVGFKAGVKDYKLTYYTPDYKTKDTDILAAFRVTPQPGVPPEEAGAAVAAESSTGTWTTVWTDGLTSLDRYKGRCYHIEPVPGEESQFIAYVAYPLDLFEEGSVTNMFTSIVGNVFGFKALRALRLEDLRIPNAYVKTFQGPPHGIQVERDKLNKYGRPLLGCTIKPKLGLSAKNYGRAVYECLRGGLDFTKDDENVNSQPFMRWRDRFLFCAEALYKAQAETGEIKGHYLNATAGTCEEMIKRAVFARELGVPIVMHDYLTGGFTANTTLSHYCRDNGLLLHIHRAMHAVIDRQKNHGMHFRVLAKALRLSGGDHIHSGTVVGKLEGEREITLGFVDLLRDDFVEKDRSRGIYFTQDWVSLPGVLPVASGGIHVWHMPALTEIFGDDSVLQFGGGTLGHPWGNAPGAVANRVALEACVQARNEGRDLASEGNQIIREASKWSPELAAACEVWKE.

Lysine 5 carries the N6,N6,N6-trimethyllysine modification. Substrate-binding residues include asparagine 114 and threonine 164. Lysine 166 (proton acceptor) is an active-site residue. Position 168 (lysine 168) interacts with substrate. Mg(2+) is bound by residues lysine 192, aspartate 194, and glutamate 195. Lysine 192 is modified (N6-carboxylysine). Histidine 285 functions as the Proton acceptor in the catalytic mechanism. Substrate contacts are provided by arginine 286, histidine 318, and serine 370.

It belongs to the RuBisCO large chain family. Type I subfamily. In terms of assembly, heterohexadecamer of 8 large chains and 8 small chains; disulfide-linked. The disulfide link is formed within the large subunit homodimers. Mg(2+) serves as cofactor. The disulfide bond which can form in the large chain dimeric partners within the hexadecamer appears to be associated with oxidative stress and protein turnover.

Its subcellular location is the plastid. It localises to the chloroplast. It catalyses the reaction 2 (2R)-3-phosphoglycerate + 2 H(+) = D-ribulose 1,5-bisphosphate + CO2 + H2O. The catalysed reaction is D-ribulose 1,5-bisphosphate + O2 = 2-phosphoglycolate + (2R)-3-phosphoglycerate + 2 H(+). Functionally, ruBisCO catalyzes two reactions: the carboxylation of D-ribulose 1,5-bisphosphate, the primary event in carbon dioxide fixation, as well as the oxidative fragmentation of the pentose substrate in the photorespiration process. Both reactions occur simultaneously and in competition at the same active site. This Lupinus nanus (Sky lupine) protein is Ribulose bisphosphate carboxylase large chain.